The chain runs to 199 residues: UPF0462 protein C4orf33 homolog (199 aa).

The protein belongs to the UPF0462 family.

This is UPF0462 protein C4orf33 homolog from Rattus norvegicus (Rat).